Here is a 613-residue protein sequence, read N- to C-terminus: Xaa-Pro aminopeptidase ApepP (613 aa).

Arginine 77 and histidine 388 together coordinate substrate. Mn(2+) is bound by residues aspartate 408, aspartate 419, and histidine 482. Substrate is bound by residues histidine 482, histidine 491, and glutamate 517. Residues glutamate 517 and glutamate 531 each contribute to the Mn(2+) site.

Belongs to the peptidase M24B family. Mn(2+) is required as a cofactor. In terms of tissue distribution, detected in gut, brain, testes and ovary.

The protein resides in the cytoplasm. The catalysed reaction is Release of any N-terminal amino acid, including proline, that is linked to proline, even from a dipeptide or tripeptide.. Inhibited by the chelating agent EDTA. Divalent metal ions have substrate- and concentration-dependent effects on activity. Activity towards bradykinin is inhibited with increasing Mn(2+) concentration. Activity towards substance P is stimulated by low Mn(2+) concentrations (in the range 10 uM-1 mM) but inhibited by Mn(2+) concentrations in excess of 1 mM. Ca(2+), Mg(2+) and Co(2+) stimulate activity towards substance P at concentrations of 10-100 uM but are inhibitory at concentrations of 1 mM. Zn(2+), Ni(2+) and Cu(2+) strongly inhibit activity towards substance P at concentrations of 1 mM. Catalyzes the removal of a penultimate prolyl residue from the N-termini of peptides, such as Arg-Pro-Pro. This chain is Xaa-Pro aminopeptidase ApepP, found in Drosophila melanogaster (Fruit fly).